We begin with the raw amino-acid sequence, 356 residues long: Protein RecA (356 aa).

79–86 (GPESSGKT) provides a ligand contact to ATP.

It belongs to the RecA family.

It localises to the cytoplasm. In terms of biological role, can catalyze the hydrolysis of ATP in the presence of single-stranded DNA, the ATP-dependent uptake of single-stranded DNA by duplex DNA, and the ATP-dependent hybridization of homologous single-stranded DNAs. It interacts with LexA causing its activation and leading to its autocatalytic cleavage. This chain is Protein RecA, found in Borrelia hermsii (strain HS1 / DAH).